A 165-amino-acid chain; its full sequence is Phosphopantetheine adenylyltransferase (165 aa).

T9 serves as a coordination point for substrate. Residues 9–10 and H17 each bind ATP; that span reads TF. Substrate contacts are provided by K41, L73, and R87. ATP contacts are provided by residues 88-90, E98, and 123-129; these read GLR and YQFISGT.

Belongs to the bacterial CoaD family. As to quaternary structure, homohexamer. The cofactor is Mg(2+).

The protein resides in the cytoplasm. It carries out the reaction (R)-4'-phosphopantetheine + ATP + H(+) = 3'-dephospho-CoA + diphosphate. Its pathway is cofactor biosynthesis; coenzyme A biosynthesis; CoA from (R)-pantothenate: step 4/5. In terms of biological role, reversibly transfers an adenylyl group from ATP to 4'-phosphopantetheine, yielding dephospho-CoA (dPCoA) and pyrophosphate. The protein is Phosphopantetheine adenylyltransferase of Burkholderia lata (strain ATCC 17760 / DSM 23089 / LMG 22485 / NCIMB 9086 / R18194 / 383).